Reading from the N-terminus, the 112-residue chain is Putative pterin-4-alpha-carbinolamine dehydratase (112 aa).

Belongs to the pterin-4-alpha-carbinolamine dehydratase family.

The enzyme catalyses (4aS,6R)-4a-hydroxy-L-erythro-5,6,7,8-tetrahydrobiopterin = (6R)-L-erythro-6,7-dihydrobiopterin + H2O. The protein is Putative pterin-4-alpha-carbinolamine dehydratase of Shewanella amazonensis (strain ATCC BAA-1098 / SB2B).